The sequence spans 357 residues: Sorbitol dehydrogenase (357 aa).

Position 2 is an N-acetylalanine (A2). C45 contacts Zn(2+). Y51 contributes to the substrate binding site. Positions 70 and 71 each coordinate Zn(2+). E156 serves as a coordination point for substrate. Positions 184, 204, and 209 each coordinate NAD(+). S211 and S225 each carry phosphoserine. NAD(+)-binding positions include 273–275 (VGL) and 297–299 (VFR). Positions 299 and 300 each coordinate substrate.

It belongs to the zinc-containing alcohol dehydrogenase family. As to quaternary structure, homotetramer. Zn(2+) serves as cofactor.

It is found in the mitochondrion membrane. The protein localises to the cell projection. The protein resides in the cilium. Its subcellular location is the flagellum. It carries out the reaction xylitol + NAD(+) = D-xylulose + NADH + H(+). The catalysed reaction is L-iditol + NAD(+) = keto-L-sorbose + NADH + H(+). It catalyses the reaction keto-D-fructose + NADH + H(+) = D-sorbitol + NAD(+). In terms of biological role, polyol dehydrogenase that catalyzes the reversible NAD(+)-dependent oxidation of various sugar alcohols. Is active with xylitol, L-iditol and D-sorbitol (D-glucitol) as substrates, leading to the C2-oxidized products D-xylulose, L-sorbose and D-fructose, respectively. Is a key enzyme in the polyol pathway that interconverts glucose and fructose via sorbitol, which constitutes an important alternate route for glucose metabolism. May play a role in sperm motility by using sorbitol as an alternative energy source for sperm motility. The polypeptide is Sorbitol dehydrogenase (SORD) (Pongo abelii (Sumatran orangutan)).